The chain runs to 304 residues: UDP-3-O-acyl-N-acetylglucosamine deacetylase (304 aa).

Residues His-78, His-237, and Asp-241 each contribute to the Zn(2+) site. The Proton donor role is filled by His-264.

It belongs to the LpxC family. It depends on Zn(2+) as a cofactor.

The catalysed reaction is a UDP-3-O-[(3R)-3-hydroxyacyl]-N-acetyl-alpha-D-glucosamine + H2O = a UDP-3-O-[(3R)-3-hydroxyacyl]-alpha-D-glucosamine + acetate. The protein operates within glycolipid biosynthesis; lipid IV(A) biosynthesis; lipid IV(A) from (3R)-3-hydroxytetradecanoyl-[acyl-carrier-protein] and UDP-N-acetyl-alpha-D-glucosamine: step 2/6. Its function is as follows. Catalyzes the hydrolysis of UDP-3-O-myristoyl-N-acetylglucosamine to form UDP-3-O-myristoylglucosamine and acetate, the committed step in lipid A biosynthesis. The polypeptide is UDP-3-O-acyl-N-acetylglucosamine deacetylase (Acidithiobacillus ferrooxidans (strain ATCC 53993 / BNL-5-31) (Leptospirillum ferrooxidans (ATCC 53993))).